The chain runs to 137 residues: MILGIGTDLANIERVEKTLARFGDRFRNRVFTPLEQARAERRADVAGTYAKRWAAKEACSKALGTGLRMGIAWKDMSVANLVTGQPVMELTGWAAERLAAMTPPGHEAIVHVSLTDDHPWAQAFVVIEARPLAAPPA.

The Mg(2+) site is built by aspartate 8 and glutamate 57.

This sequence belongs to the P-Pant transferase superfamily. AcpS family. Mg(2+) serves as cofactor.

Its subcellular location is the cytoplasm. It carries out the reaction apo-[ACP] + CoA = holo-[ACP] + adenosine 3',5'-bisphosphate + H(+). Transfers the 4'-phosphopantetheine moiety from coenzyme A to a Ser of acyl-carrier-protein. The polypeptide is Holo-[acyl-carrier-protein] synthase (Cereibacter sphaeroides (strain ATCC 17025 / ATH 2.4.3) (Rhodobacter sphaeroides)).